Consider the following 249-residue polypeptide: Triosephosphate isomerase (249 aa).

9–11 (NWK) provides a ligand contact to substrate. His95 (electrophile) is an active-site residue. The active-site Proton acceptor is Glu166. Substrate contacts are provided by residues Gly172, Ser211, and 232-233 (GG).

This sequence belongs to the triosephosphate isomerase family. Homodimer.

It localises to the cytoplasm. It catalyses the reaction D-glyceraldehyde 3-phosphate = dihydroxyacetone phosphate. The protein operates within carbohydrate biosynthesis; gluconeogenesis. Its pathway is carbohydrate degradation; glycolysis; D-glyceraldehyde 3-phosphate from glycerone phosphate: step 1/1. In terms of biological role, involved in the gluconeogenesis. Catalyzes stereospecifically the conversion of dihydroxyacetone phosphate (DHAP) to D-glyceraldehyde-3-phosphate (G3P). This Legionella pneumophila (strain Lens) protein is Triosephosphate isomerase.